The primary structure comprises 254 residues: Citrate synthase-lysine N-methyltransferase CSKMT, mitochondrial (254 aa).

Residues 1–45 constitute a mitochondrion transit peptide; it reads MLLNRFLVPLRSLQKLTQARRWHQTSLINDLVVNMDKKAMWDRFY.

It belongs to the methyltransferase superfamily.

The protein localises to the mitochondrion. It carries out the reaction L-lysyl-[citrate synthase] + S-adenosyl-L-methionine = N(6)-methyl-L-lysyl-[citrate synthase] + S-adenosyl-L-homocysteine + H(+). The catalysed reaction is N(6)-methyl-L-lysyl-[citrate synthase] + S-adenosyl-L-methionine = N(6),N(6)-dimethyl-L-lysyl-[citrate synthase] + S-adenosyl-L-homocysteine + H(+). The enzyme catalyses N(6),N(6)-dimethyl-L-lysyl-[citrate synthase] + S-adenosyl-L-methionine = N(6),N(6),N(6)-trimethyl-L-lysyl-[citrate synthase] + S-adenosyl-L-homocysteine + H(+). With respect to regulation, citrate synthase-lysine methyltransferase activity is inhibited by S-adenosylhomocysteine (AdoHcy) and oxaloacetate (OAA). In terms of biological role, protein-lysine methyltransferase that selectively trimethylates citrate synthase (CS) in mitochondria. Seems to conduct trimethylation in a highly distributive manner rather than in a processive manner, and thus introduces a single methyl group per binding event. The polypeptide is Citrate synthase-lysine N-methyltransferase CSKMT, mitochondrial (Danio rerio (Zebrafish)).